Reading from the N-terminus, the 1707-residue chain is MSTSSSNIPYDVGSPRQQSQTEIRSILNPSTTSTGAHPSFNQYHPPTAAPPLIPSHIPLQSTTPSTLGLSLGTPLYQSERDIGYPRDQKPTSNYYDPTSDSSERRPATAESKWSDREAKTSQRRDSYPYQQNQPPAPSTDGPMNLYNGGYKSPVNSHFPPGSPISHAHPQGRVPPLVTQSPRMPAMESPISRHNGLGGGPELQDKPVIKQEPVPASTPSRPVDPMAFSSILSSAAPEPTPKPQPTPTPIVSKPRKASRQPIPTLKPEPSSAPSSRQSSVAPAPQPPTSRVPAKRKANGETKPTPKPKPFTKDQERDIVILMSKLDGEPEDSDVEFAEEKRLYQTRSLKRKLEVEKIETSKTKQRRTDFTNKMAKRLEKHAKAGEERYREVEGDAAISKVQADEIQTEKERKKDMQRKRRREKTVQNNMEQKEIALAKAQAAQDDQERHKFLRDAQRAEKKAQQTKQILARGDKGPEIRAVSPMEPNMQGGSMSTFTAVDPDSTKKPKRGGARPRKSKEQKQAEKDSAAAAQEAIDKGESPALMPIRDAAEFKDMKPLPSKEGVTKIKLKFKAPAEPVEVKEESPSAPVDQHNTKMYHVVYDQIWKDLARKEVPKVFKLAVDSYSIRASNLKKTAILASKEAKRWQLRTNKGTKDLQARAKRVMREMMSFWKRNEREERDTRRAAEKQEIENAKKAEADREANRQKRKLNFLISQTELYSHFIGKKIKTDEVERSTDHPDVAVPDKADHAKPDHGDLPEGTAPAKVTNFEDLDFDAEDESVLKAAAMANAQNAIQEAQNKARAFNKKDDAPAMDDEGEMNFQNPAGMGDVDIEQPKMLQAQLKEYQLKGLNWLVNLYEQGINGILADEMGLGKTVQSISVMAYLAEKHGIWGPFLVVAPASTLHNWQQEITKFVPRLKVLPYWGTAADRKVLRKFWDRKHITYTEDAPFHVLVTSYQLVVSDVAYFQKMKWQYMILDEAQAIKSSQSSRWKSLLGFHCRNRLLLTGTPIQNNMQELWALLHFIMPSLFDSHDEFSEWFSKDIESHAQSNTKLNEDQLKRLHMILKPFMLRRVKKHVQKELGDKIEEDIFCDLTYRQRAYYSNLRNQISIMDLIEKATIGDDNDTGTLMNLVMQFRKVCNHPDLFERAETTSPLSFSYFAEAGSFLREGSNVTVAYSARNMIEYSLPRLIWREGGRLDLPGHDNEHAGVKAKCLESLFNVWKPENIVDSAKEDGAFSWLRFTNTSVQELSTASRKDVFARAVDLVKRPQTLGRLNIVYDEEEDKNYTPVHSMLQIVNRKDRKPLAEVTNEGYLNKLFNVAKDVWGQSGMSRMEQCGRPSATAPPIEVTCSSRGAVIERQKILFNVPMRRALFGPSPVEEKALITSKVSPLFYPPKPMLPLPTSEKQRFTNIKVPSMRRFVTDSGKLAKLDSLLTKLKEGGHRVLLYFQMTRMIDLMEEYLTYRNYKYLRLDGSTKLEDRRDTVHDFQTRPEIFIFLLSTRAGGLGINLTSADTVIFYDSDWNPTIDSQAMDRAHRLGQTRQVTVYRMITRGTIEERIRKRALQKEEVQKVVMTGGAGGGVDFNTRSKENRTKDIAMWLVDDEEAAEIERKEAEQLRYEAENPTASKKGKGKGKKGKEGGGGSLEDLYHEGEGHFDDGSNRPSGTATPIAVDASKKKGSSSRKSGGGGRSKKAKTAKERLAMADGDVDMA.

Disordered regions lie at residues 1-315, 398-429, 454-543, 673-702, and 729-761; these read MSTS…DQER, KVQA…NNME, AQRA…PALM, NERE…REAN, and DEVE…EGTA. Residues 15 to 44 show a composition bias toward polar residues; sequence PRQQSQTEIRSILNPSTTSTGAHPSFNQYH. Over residues 61 to 75 the composition is skewed to low complexity; that stretch reads STTPSTLGLSLGTPL. Residues 78-89 are compositionally biased toward basic and acidic residues; sequence SERDIGYPRDQK. Over residues 90-100 the composition is skewed to polar residues; sequence PTSNYYDPTSD. Over residues 101–126 the composition is skewed to basic and acidic residues; that stretch reads SSERRPATAESKWSDREAKTSQRRDS. T178 is subject to Phosphothreonine. Positions 237–247 are enriched in pro residues; it reads EPTPKPQPTPT. The span at 266 to 281 shows a compositional bias: low complexity; sequence PEPSSAPSSRQSSVAP. A coiled-coil region spans residues 369–470; that stretch reads TNKMAKRLEK…AQQTKQILAR (102 aa). Positions 505 to 515 are enriched in basic residues; it reads KPKRGGARPRK. Residues 516 to 526 are compositionally biased toward basic and acidic residues; it reads SKEQKQAEKDS. The region spanning 603–728 is the DBINO domain; sequence IWKDLARKEV…SHFIGKKIKT (126 aa). Basic and acidic residues predominate over residues 729-756; it reads DEVERSTDHPDVAVPDKADHAKPDHGDL. In terms of domain architecture, Helicase ATP-binding spans 853–1025; the sequence is VNLYEQGING…WALLHFIMPS (173 aa). 866-873 is a binding site for ATP; it reads DEMGLGKT. A DEAQ box motif is present at residues 976 to 979; it reads DEAQ. The Helicase C-terminal domain occupies 1426 to 1586; sequence KLDSLLTKLK…GVDFNTRSKE (161 aa). Residues 1610–1707 are disordered; that stretch reads AEQLRYEAEN…AMADGDVDMA (98 aa). Residues 1643-1656 are compositionally biased toward basic and acidic residues; that stretch reads DLYHEGEGHFDDGS.

The protein belongs to the SNF2/RAD54 helicase family. In terms of assembly, component of the INO80 chromatin-remodeling complex.

The protein resides in the nucleus. It catalyses the reaction ATP + H2O = ADP + phosphate + H(+). ATPase component of the INO80 complex which remodels chromatin by shifting nucleosomes and is involved in DNA repair. This Sclerotinia sclerotiorum (strain ATCC 18683 / 1980 / Ss-1) (White mold) protein is Chromatin-remodeling ATPase INO80 (INO80).